The chain runs to 241 residues: tRNA pseudouridine synthase A (241 aa).

D53 functions as the Nucleophile in the catalytic mechanism. Y110 contacts substrate.

It belongs to the tRNA pseudouridine synthase TruA family. Homodimer.

The enzyme catalyses uridine(38/39/40) in tRNA = pseudouridine(38/39/40) in tRNA. Its function is as follows. Formation of pseudouridine at positions 38, 39 and 40 in the anticodon stem and loop of transfer RNAs. The chain is tRNA pseudouridine synthase A from Malacoplasma penetrans (strain HF-2) (Mycoplasma penetrans).